The chain runs to 535 residues: Importin subunit alpha-2 (535 aa).

The 58-residue stretch at 1–58 (MSLRPNAKTEVRRNRYKVAVDAEEGRRRREDNMVEIRKSKREESLQKKRREGLQANQL) folds into the IBB domain. The span at 20 to 46 (VDAEEGRRRREDNMVEIRKSKREESLQ) shows a compositional bias: basic and acidic residues. Residues 20–67 (VDAEEGRRRREDNMVEIRKSKREESLQKKRREGLQANQLPQFAPSPVP) form a disordered region. 10 ARM repeats span residues 67-106 (PASS…KLLS), 110-150 (SPPI…NIAS), 153-192 (SENT…NVAG), 195-235 (PRCR…NFCR), 237-276 (KPQP…YLSD), 279-318 (NDKI…NIVT), 321-361 (DLQT…NITA), 364-403 (RDQI…NATS), 407-446 (PDQI…NILK), and 461-500 (NFYA…TYWL).

It belongs to the importin alpha family. As to quaternary structure, forms a complex with the importin subunit beta-1 KPNB1. Interacts with A.tumefaciens VirD2 and VirE2. Binds to SWO1.

The protein resides in the nucleus envelope. In terms of biological role, binds to conventional NLS motifs and mediates nuclear protein import across the nuclear envelope. Involved in the maintenance of cell wall integrity under salt stress via interaction with SWO1. Acts as a cellular receptor for the nuclear import of the virD2 protein of Agrobacterium, but is not essential for Agrobacterium-mediated root transformation. In Arabidopsis thaliana (Mouse-ear cress), this protein is Importin subunit alpha-2.